The primary structure comprises 586 residues: Probable zinc metalloprotease EGY3, chloroplastic (586 aa).

The transit peptide at 1 to 54 (MSSSSLVTSLLFSSSSSSNTATSTSSRRSFSLFSKNQYCKPSPLRRSSSLLLVR) directs the protein to the chloroplast. Residues 62–73 (EEKAAPAAESHH) show a composition bias toward basic and acidic residues. The disordered stretch occupies residues 62-118 (EEKAAPAAESHHAGGGQDDAATASHHAVEGENGVADADGGGVKKSKEELEEEEQQEV). A coiled-coil region spans residues 103–195 (VKKSKEELEE…NTFKALDLNK (93 aa)). The next 7 membrane-spanning stretches (helical) occupy residues 287-307 (LSAV…SGFF), 318-338 (VSDV…SEIA), 389-409 (ASAY…DGSL), 427-447 (PLLS…GNVL), 454-474 (VGVP…VTSL), 506-526 (VALG…WGLF), and 550-570 (YAWG…NGGG).

It belongs to the peptidase M50B family.

It localises to the plastid. Its subcellular location is the chloroplast membrane. Its function is as follows. Probable membrane-associated metalloprotease that may be involved in chloroplast development. This Oryza sativa subsp. indica (Rice) protein is Probable zinc metalloprotease EGY3, chloroplastic (EGY3).